We begin with the raw amino-acid sequence, 142 residues long: Transcriptional regulator MraZ (142 aa).

SpoVT-AbrB domains lie at 5 to 51 (ASAL…PRPE) and 77 to 120 (AADV…DAAT).

This sequence belongs to the MraZ family. In terms of assembly, forms oligomers.

Its subcellular location is the cytoplasm. It localises to the nucleoid. The polypeptide is Transcriptional regulator MraZ (Cupriavidus taiwanensis (strain DSM 17343 / BCRC 17206 / CCUG 44338 / CIP 107171 / LMG 19424 / R1) (Ralstonia taiwanensis (strain LMG 19424))).